The following is a 584-amino-acid chain: Protein DENND6A (584 aa).

The segment at 1–23 (MALWERGAGGAAEAGEDATEEPE) is disordered. Residues 39 to 218 (HCVCVVGFDL…KLRIPTYRDK (180 aa)) enclose the uDENN domain. Residues 244-369 (EVDLFRCFCP…VKVKKLKNLK (126 aa)) enclose the cDENN domain. The region spanning 371–504 (LDSKPGVYTS…RSRQKEMTQN (134 aa)) is the dDENN domain.

Belongs to the DENND6 family.

Its subcellular location is the recycling endosome. The protein localises to the cytoplasm. Guanine nucleotide exchange factor (GEF) for RAB14. The chain is Protein DENND6A (DENND6A) from Gallus gallus (Chicken).